Here is a 283-residue protein sequence, read N- to C-terminus: Urease accessory protein UreD 2 (283 aa).

Basic and acidic residues predominate over residues 1-11; that stretch reads MGRRAPDRLDR. Positions 1–30 are disordered; sequence MGRRAPDRLDRGVTTTSPRTQAPPQAGRGV. Residues 13–23 show a composition bias toward polar residues; that stretch reads VTTTSPRTQAP.

This sequence belongs to the UreD family. As to quaternary structure, ureD, UreF and UreG form a complex that acts as a GTP-hydrolysis-dependent molecular chaperone, activating the urease apoprotein by helping to assemble the nickel containing metallocenter of UreC. The UreE protein probably delivers the nickel.

It is found in the cytoplasm. Its function is as follows. Required for maturation of urease via the functional incorporation of the urease nickel metallocenter. This chain is Urease accessory protein UreD 2, found in Saccharopolyspora erythraea (strain ATCC 11635 / DSM 40517 / JCM 4748 / NBRC 13426 / NCIMB 8594 / NRRL 2338).